The primary structure comprises 105 residues: Integration host factor subunit beta (105 aa).

Belongs to the bacterial histone-like protein family. In terms of assembly, heterodimer of an alpha and a beta chain.

Its function is as follows. This protein is one of the two subunits of integration host factor, a specific DNA-binding protein that functions in genetic recombination as well as in transcriptional and translational control. The polypeptide is Integration host factor subunit beta (Nitrosomonas europaea (strain ATCC 19718 / CIP 103999 / KCTC 2705 / NBRC 14298)).